A 150-amino-acid chain; its full sequence is 3-dehydroquinate dehydratase (150 aa).

Tyr-26 (proton acceptor) is an active-site residue. 3 residues coordinate substrate: Asn-77, His-83, and Asp-90. His-103 functions as the Proton donor in the catalytic mechanism. Residues 104–105 (LS) and Arg-114 contribute to the substrate site.

Belongs to the type-II 3-dehydroquinase family. As to quaternary structure, homododecamer.

It carries out the reaction 3-dehydroquinate = 3-dehydroshikimate + H2O. Its pathway is metabolic intermediate biosynthesis; chorismate biosynthesis; chorismate from D-erythrose 4-phosphate and phosphoenolpyruvate: step 3/7. Catalyzes a trans-dehydration via an enolate intermediate. This chain is 3-dehydroquinate dehydratase, found in Mannheimia succiniciproducens (strain KCTC 0769BP / MBEL55E).